Consider the following 160-residue polypeptide: Sec-independent protein translocase protein TatB (160 aa).

Residues 1–21 (MFGMGFFEILVVLVVAIIFLG) form a helical membrane-spanning segment. A disordered region spans residues 118-160 (HLNEEVSNEEALNKEVSSDESPKEVQLATDNNTKEHDKEKEHV). 2 stretches are compositionally biased toward basic and acidic residues: residues 128-140 (ALNKEVSSDESPK) and 149-160 (NTKEHDKEKEHV).

This sequence belongs to the TatB family. The Tat system comprises two distinct complexes: a TatABC complex, containing multiple copies of TatA, TatB and TatC subunits, and a separate TatA complex, containing only TatA subunits. Substrates initially bind to the TatABC complex, which probably triggers association of the separate TatA complex to form the active translocon.

The protein localises to the cell inner membrane. In terms of biological role, part of the twin-arginine translocation (Tat) system that transports large folded proteins containing a characteristic twin-arginine motif in their signal peptide across membranes. Together with TatC, TatB is part of a receptor directly interacting with Tat signal peptides. TatB may form an oligomeric binding site that transiently accommodates folded Tat precursor proteins before their translocation. This Helicobacter pylori (strain HPAG1) protein is Sec-independent protein translocase protein TatB.